The chain runs to 322 residues: Ribonuclease Z (322 aa).

Histidine 62, histidine 64, aspartate 66, histidine 67, histidine 139, aspartate 210, and histidine 268 together coordinate Zn(2+). Aspartate 66 functions as the Proton acceptor in the catalytic mechanism.

Belongs to the RNase Z family. In terms of assembly, homodimer. It depends on Zn(2+) as a cofactor.

The catalysed reaction is Endonucleolytic cleavage of RNA, removing extra 3' nucleotides from tRNA precursor, generating 3' termini of tRNAs. A 3'-hydroxy group is left at the tRNA terminus and a 5'-phosphoryl group is left at the trailer molecule.. In terms of biological role, zinc phosphodiesterase, which displays some tRNA 3'-processing endonuclease activity. Probably involved in tRNA maturation, by removing a 3'-trailer from precursor tRNA. The protein is Ribonuclease Z of Nostoc sp. (strain PCC 7120 / SAG 25.82 / UTEX 2576).